Consider the following 318-residue polypeptide: Sol locus transcriptional repressor (318 aa).

TPR repeat units lie at residues 65–98 (ANAY…RPKT), 99–132 (INDV…QPNV), 133–166 (GISY…GSTN), and 167–199 (SVYR…EPEK).

Transcriptional repressor of the sol locus (adhE/aad, ctfA, ctfB and adc) genes for butanol and acetone formation. The polypeptide is Sol locus transcriptional repressor (solR) (Clostridium acetobutylicum (strain ATCC 824 / DSM 792 / JCM 1419 / IAM 19013 / LMG 5710 / NBRC 13948 / NRRL B-527 / VKM B-1787 / 2291 / W)).